Here is a 178-residue protein sequence, read N- to C-terminus: Large ribosomal subunit protein uL16 (178 aa).

The protein belongs to the universal ribosomal protein uL16 family.

The sequence is that of Large ribosomal subunit protein uL16 from Pyrobaculum calidifontis (strain DSM 21063 / JCM 11548 / VA1).